We begin with the raw amino-acid sequence, 286 residues long: ATP synthase gamma chain (286 aa).

This sequence belongs to the ATPase gamma chain family. As to quaternary structure, F-type ATPases have 2 components, CF(1) - the catalytic core - and CF(0) - the membrane proton channel. CF(1) has five subunits: alpha(3), beta(3), gamma(1), delta(1), epsilon(1). CF(0) has three main subunits: a, b and c.

It localises to the cell inner membrane. Its function is as follows. Produces ATP from ADP in the presence of a proton gradient across the membrane. The gamma chain is believed to be important in regulating ATPase activity and the flow of protons through the CF(0) complex. The chain is ATP synthase gamma chain from Leptospira borgpetersenii serovar Hardjo-bovis (strain JB197).